We begin with the raw amino-acid sequence, 334 residues long: Protein SCO1 homolog 1, mitochondrial (334 aa).

Residues 1–13 (MASALCRTASRLR) constitute a mitochondrion transit peptide. A disordered region spans residues 74–120 (SASDTTSKHDSGKPETKSSEKNEKSGGSESSDGGSDHKNERASGKDV). Composition is skewed to basic and acidic residues over residues 79–99 (TSKH…EKSG) and 107–120 (GSDH…GKDV). A helical membrane pass occupies residues 125–144 (VSWMSFFLLFATGAGLVYYY). A Thioredoxin domain is found at 166–331 (PSAGKAAIGG…TDGVVKEIRQ (166 aa)). Cu cation contacts are provided by Cys-206, Cys-210, and His-295.

Belongs to the SCO1/2 family. In terms of tissue distribution, expressed in the whole plant with highest expression in imbibed seeds, embryos, endosperm, and root tips.

The protein localises to the mitochondrion inner membrane. Its function is as follows. Thought to play a role in cellular copper homeostasis, mitochondrial redox signaling or insertion of copper into the active site of COX. Plays an essential role in embryo development. The chain is Protein SCO1 homolog 1, mitochondrial (HCC1) from Arabidopsis thaliana (Mouse-ear cress).